The chain runs to 484 residues: Aspartyl/glutamyl-tRNA(Asn/Gln) amidotransferase subunit B (484 aa).

The protein belongs to the GatB/GatE family. GatB subfamily. Heterotrimer of A, B and C subunits.

The catalysed reaction is L-glutamyl-tRNA(Gln) + L-glutamine + ATP + H2O = L-glutaminyl-tRNA(Gln) + L-glutamate + ADP + phosphate + H(+). It catalyses the reaction L-aspartyl-tRNA(Asn) + L-glutamine + ATP + H2O = L-asparaginyl-tRNA(Asn) + L-glutamate + ADP + phosphate + 2 H(+). Allows the formation of correctly charged Asn-tRNA(Asn) or Gln-tRNA(Gln) through the transamidation of misacylated Asp-tRNA(Asn) or Glu-tRNA(Gln) in organisms which lack either or both of asparaginyl-tRNA or glutaminyl-tRNA synthetases. The reaction takes place in the presence of glutamine and ATP through an activated phospho-Asp-tRNA(Asn) or phospho-Glu-tRNA(Gln). The protein is Aspartyl/glutamyl-tRNA(Asn/Gln) amidotransferase subunit B of Bordetella parapertussis (strain 12822 / ATCC BAA-587 / NCTC 13253).